The sequence spans 463 residues: ATP-dependent protease ATPase subunit HslU (463 aa).

ATP contacts are provided by residues isoleucine 19, 61–66 (GVGKTE), aspartate 277, glutamate 341, and arginine 413.

Belongs to the ClpX chaperone family. HslU subfamily. In terms of assembly, a double ring-shaped homohexamer of HslV is capped on each side by a ring-shaped HslU homohexamer. The assembly of the HslU/HslV complex is dependent on binding of ATP.

The protein resides in the cytoplasm. Functionally, ATPase subunit of a proteasome-like degradation complex; this subunit has chaperone activity. The binding of ATP and its subsequent hydrolysis by HslU are essential for unfolding of protein substrates subsequently hydrolyzed by HslV. HslU recognizes the N-terminal part of its protein substrates and unfolds these before they are guided to HslV for hydrolysis. This Bacillus cereus (strain ATCC 14579 / DSM 31 / CCUG 7414 / JCM 2152 / NBRC 15305 / NCIMB 9373 / NCTC 2599 / NRRL B-3711) protein is ATP-dependent protease ATPase subunit HslU.